We begin with the raw amino-acid sequence, 427 residues long: Glutamyl-tRNA reductase (427 aa).

Substrate contacts are provided by residues 49 to 52 (TCNR), serine 101, 106 to 108 (EPQ), and glutamine 112. Cysteine 50 (nucleophile) is an active-site residue. Residue 181–186 (GAGETI) coordinates NADP(+). The tract at residues 407–427 (FPATPGYRHPPVRPDDADPAP) is disordered. Residues 418 to 427 (VRPDDADPAP) are compositionally biased toward basic and acidic residues.

The protein belongs to the glutamyl-tRNA reductase family. Homodimer.

It carries out the reaction (S)-4-amino-5-oxopentanoate + tRNA(Glu) + NADP(+) = L-glutamyl-tRNA(Glu) + NADPH + H(+). Its pathway is porphyrin-containing compound metabolism; protoporphyrin-IX biosynthesis; 5-aminolevulinate from L-glutamyl-tRNA(Glu): step 1/2. Its function is as follows. Catalyzes the NADPH-dependent reduction of glutamyl-tRNA(Glu) to glutamate 1-semialdehyde (GSA). The protein is Glutamyl-tRNA reductase of Stenotrophomonas maltophilia (strain K279a).